We begin with the raw amino-acid sequence, 353 residues long: Small ribosomal subunit biogenesis GTPase RsgA (353 aa).

Residues 1–17 (MSKNKLSKGQQRRVNAN) are compositionally biased toward polar residues. The interval 1–25 (MSKNKLSKGQQRRVNANHQRRLKTT) is disordered. The region spanning 104-274 (ASVLTRPDFY…VIDSPGVREF (171 aa)) is the CP-type G domain. GTP contacts are provided by residues 160-163 (NKID) and 214-222 (GQSGVGKSS). Positions 298, 303, 305, and 311 each coordinate Zn(2+).

It belongs to the TRAFAC class YlqF/YawG GTPase family. RsgA subfamily. In terms of assembly, monomer. Associates with 30S ribosomal subunit, binds 16S rRNA. The cofactor is Zn(2+).

The protein localises to the cytoplasm. Functionally, one of several proteins that assist in the late maturation steps of the functional core of the 30S ribosomal subunit. Helps release RbfA from mature subunits. May play a role in the assembly of ribosomal proteins into the subunit. Circularly permuted GTPase that catalyzes slow GTP hydrolysis, GTPase activity is stimulated by the 30S ribosomal subunit. In Klebsiella pneumoniae (strain 342), this protein is Small ribosomal subunit biogenesis GTPase RsgA.